A 261-amino-acid chain; its full sequence is 5'-nucleotidase SurE (261 aa).

Asp12, Asp13, Ser43, and Asn100 together coordinate a divalent metal cation.

Belongs to the SurE nucleotidase family. Requires a divalent metal cation as cofactor.

The protein resides in the cytoplasm. It catalyses the reaction a ribonucleoside 5'-phosphate + H2O = a ribonucleoside + phosphate. Nucleotidase that shows phosphatase activity on nucleoside 5'-monophosphates. This Protochlamydia amoebophila (strain UWE25) protein is 5'-nucleotidase SurE.